Reading from the N-terminus, the 209-residue chain is rRNA N(6)-adenosine-methyltransferase METTL5 (209 aa).

Residues Q28, T31, G59, C62, V64, D81, and 108 to 109 (DV) contribute to the S-adenosyl-L-methionine site.

The protein belongs to the methyltransferase superfamily. PrmA family. In terms of assembly, heterodimer; heterodimerizes with TRMT112. Ubiquitously expressed in brain.

The protein resides in the nucleus. The protein localises to the presynapse. It is found in the postsynapse. It carries out the reaction adenosine(1832) in 18S rRNA + S-adenosyl-L-methionine = N(6)-methyladenosine(1832) in 18S rRNA + S-adenosyl-L-homocysteine + H(+). With respect to regulation, rRNA N6-adenosine-methyltransferase activity is inhibited by zinc. Its function is as follows. Catalytic subunit of a heterodimer with TRMT112, which specifically methylates the 6th position of adenine in position 1832 of 18S rRNA. N6-methylation of adenine(1832) in 18S rRNA resides in the decoding center of 18S rRNA and is required for translation and embryonic stem cells (ESCs) pluripotency and differentiation. In Mus musculus (Mouse), this protein is rRNA N(6)-adenosine-methyltransferase METTL5.